The primary structure comprises 5065 residues: Dynein heavy chain-like protein 1 (5065 aa).

A stem region spans residues 1-1957 (MELEKTHLIN…IIKMADATFE (1957 aa)). Positions 1677–1705 (QMEGFQKQLDRLSDSLSKIQKALGEYLEK) form a coiled coil. The interval 1958–2179 (YGYEYLGMCE…LRSLKSVLNS (222 aa)) is AAA 1. 1996 to 2003 (GPAGTGKT) contacts ATP. The segment at 2203-2223 (FNETLDNNNNNDNNNERKTTT) is disordered. Over residues 2204-2215 (NETLDNNNNNDN) the composition is skewed to low complexity. AAA stretches follow at residues 2281–2632 (NEIH…YEYI), 2751–3004 (DVDR…WKLA), and 3097–3367 (IFNE…GNRY). 2319 to 2326 (GDVGTGKS) serves as a coordination point for ATP. Positions 2507–2529 (EKNQNGNENGNENEKKNINIINN) are disordered. Residues 2790 to 2797 (GPPGSGKT) and 3135 to 3142 (GASGAGKT) contribute to the ATP site. The tract at residues 3386-3701 (IDEKKEEVSS…ETFINLEEAS (316 aa)) is stalk. Coiled-coil stretches lie at residues 3388-3466 (EKKE…LDEQ) and 3970-3997 (TMEKLKVQGAEASKEVNIAEEVMVEVEN). AAA regions lie at residues 3754-3983 (LSRP…EASK) and 4289-4507 (FNKI…VVDS). Residues 4686–4705 (KDKNKDEDKNKNKENDDNNK) show a composition bias toward basic and acidic residues. The interval 4686–4727 (KDKNKDEDKNKNKENDDNNKKHIGNNKLVISSSERTESETSE) is disordered.

The protein belongs to the dynein heavy chain family. In terms of assembly, consists of at least two heavy chains and a number of intermediate and light chains.

The protein resides in the cytoplasm. It is found in the cytoskeleton. Its function is as follows. Acts as a motor for the intracellular retrograde motility of vesicles and organelles along microtubules. Dynein has ATPase activity; the force-producing power stroke is thought to occur on release of ADP. The chain is Dynein heavy chain-like protein 1 from Plasmodium falciparum (isolate 3D7).